The chain runs to 98 residues: Large ribosomal subunit protein uL23 (98 aa).

The protein belongs to the universal ribosomal protein uL23 family. In terms of assembly, part of the 50S ribosomal subunit. Contacts protein L29, and trigger factor when it is bound to the ribosome.

Its function is as follows. One of the early assembly proteins it binds 23S rRNA. One of the proteins that surrounds the polypeptide exit tunnel on the outside of the ribosome. Forms the main docking site for trigger factor binding to the ribosome. This is Large ribosomal subunit protein uL23 from Bordetella petrii (strain ATCC BAA-461 / DSM 12804 / CCUG 43448).